A 460-amino-acid chain; its full sequence is CUGBP Elav-like family member 6 (460 aa).

Residues 1–10 are compositionally biased toward low complexity; sequence MAAAPGGSAP. Residues 1–37 form a disordered region; it reads MAAAPGGSAPPAGPSPRLAFSTADSGGGMSGLNPGPA. 2 consecutive RRM domains span residues 46 to 127 and 134 to 214; these read IKLF…PAAS and RKLF…LADT. The disordered stretch occupies residues 316-336; sequence NGFGSLTPQSNGQPGSDTLYN. A compositionally biased stretch (polar residues) spans 319 to 336; sequence GSLTPQSNGQPGSDTLYN. One can recognise an RRM 3 domain in the interval 375 to 453; sequence CNLFIYHLPQ…KRLKVQLKRP (79 aa).

This sequence belongs to the CELF/BRUNOL family.

The protein resides in the nucleus. Its subcellular location is the cytoplasm. RNA-binding protein implicated in the regulation of pre-mRNA alternative splicing. Mediates exon inclusion and/or exclusion in pre-mRNA that are subject to tissue-specific and developmentally regulated alternative splicing. Specifically activates exon 5 inclusion of TNNT2 in a muscle-specific splicing enhancer (MSE)-dependent manner. Promotes also exon exclusion of INSR pre-mRNA. The protein is CUGBP Elav-like family member 6 (Celf6) of Mus musculus (Mouse).